We begin with the raw amino-acid sequence, 249 residues long: Large ribosomal subunit protein uL22m (249 aa).

The N-terminal 22 residues, 1-22 (MKYINQFMKISKGFLVPSSTIG), are a transit peptide targeting the mitochondrion. The segment at 70 to 98 (ANQKDDSNRQQKEERVKERPRSRISFKKQ) is disordered. The segment covering 72-98 (QKDDSNRQQKEERVKERPRSRISFKKQ) has biased composition (basic and acidic residues).

This sequence belongs to the universal ribosomal protein uL22 family. As to quaternary structure, component of the mitochondrial large ribosomal subunit (mt-LSU). Mature yeast 74S mitochondrial ribosomes consist of a small (37S) and a large (54S) subunit. The 37S small subunit contains a 15S ribosomal RNA (15S mt-rRNA) and at least 32 different proteins. The 54S large subunit contains a 21S rRNA (21S mt-rRNA) and at least 45 different proteins. uL22m forms the wall of the exit tunnel.

The protein localises to the mitochondrion. Component of the mitochondrial ribosome (mitoribosome), a dedicated translation machinery responsible for the synthesis of mitochondrial genome-encoded proteins, including at least some of the essential transmembrane subunits of the mitochondrial respiratory chain. The mitoribosomes are attached to the mitochondrial inner membrane and translation products are cotranslationally integrated into the membrane. The protein is Large ribosomal subunit protein uL22m (mrpl22) of Schizosaccharomyces pombe (strain 972 / ATCC 24843) (Fission yeast).